The following is a 465-amino-acid chain: Probable Xaa-Pro aminopeptidase pepP (465 aa).

4 residues coordinate Mn(2+): Asp263, Asp274, Glu397, and Glu437.

Belongs to the peptidase M24B family. Mn(2+) is required as a cofactor.

The catalysed reaction is Release of any N-terminal amino acid, including proline, that is linked to proline, even from a dipeptide or tripeptide.. Catalyzes the removal of a penultimate prolyl residue from the N-termini of peptides. This is Probable Xaa-Pro aminopeptidase pepP (pepP) from Penicillium rubens (strain ATCC 28089 / DSM 1075 / NRRL 1951 / Wisconsin 54-1255) (Penicillium chrysogenum).